Reading from the N-terminus, the 288-residue chain is Ribosomal protein L11 methyltransferase (288 aa).

S-adenosyl-L-methionine contacts are provided by threonine 141, glycine 164, aspartate 186, and asparagine 227.

Belongs to the methyltransferase superfamily. PrmA family.

The protein localises to the cytoplasm. It carries out the reaction L-lysyl-[protein] + 3 S-adenosyl-L-methionine = N(6),N(6),N(6)-trimethyl-L-lysyl-[protein] + 3 S-adenosyl-L-homocysteine + 3 H(+). In terms of biological role, methylates ribosomal protein L11. The chain is Ribosomal protein L11 methyltransferase from Myxococcus xanthus (strain DK1622).